Here is a 158-residue protein sequence, read N- to C-terminus: 2-C-methyl-D-erythritol 2,4-cyclodiphosphate synthase (158 aa).

A divalent metal cation is bound by residues Asp-9 and His-11. 4-CDP-2-C-methyl-D-erythritol 2-phosphate contacts are provided by residues 9-11 and 35-36; these read DVH and HS. His-43 lines the a divalent metal cation pocket. 4-CDP-2-C-methyl-D-erythritol 2-phosphate contacts are provided by residues 57–59, 62–66, 133–136, Phe-140, and Arg-143; these read DIG, FPDTD, and TTTE.

This sequence belongs to the IspF family. Homotrimer. Requires a divalent metal cation as cofactor.

It catalyses the reaction 4-CDP-2-C-methyl-D-erythritol 2-phosphate = 2-C-methyl-D-erythritol 2,4-cyclic diphosphate + CMP. The protein operates within isoprenoid biosynthesis; isopentenyl diphosphate biosynthesis via DXP pathway; isopentenyl diphosphate from 1-deoxy-D-xylulose 5-phosphate: step 4/6. Its function is as follows. Involved in the biosynthesis of isopentenyl diphosphate (IPP) and dimethylallyl diphosphate (DMAPP), two major building blocks of isoprenoid compounds. Catalyzes the conversion of 4-diphosphocytidyl-2-C-methyl-D-erythritol 2-phosphate (CDP-ME2P) to 2-C-methyl-D-erythritol 2,4-cyclodiphosphate (ME-CPP) with a corresponding release of cytidine 5-monophosphate (CMP). In Actinobacillus succinogenes (strain ATCC 55618 / DSM 22257 / CCUG 43843 / 130Z), this protein is 2-C-methyl-D-erythritol 2,4-cyclodiphosphate synthase.